We begin with the raw amino-acid sequence, 878 residues long: MEVKGPSGRSFCCESEGQFKSCLKRHTPSLLLPSSWKGNSGSCLMAKALHRMSPTPNSCPLPLPLCRMSGVLCSRNLFTFKFSLFQLDSGASGEPGHSLGLTLGFSHCGNCQTAVVSAQPEGMASNGAYPALGPGVTANPGTSLSVFTALPFTTPAPGPAHGPLLVTAGAPPGGPLVLSTLPSTPLVTEQDGCGPSGAGASNVFVQMRTEVGPVKAAQAQTLVLTQAPLVWQAPGALCGGVVCPPPLLLAAAPVVPVMAAQVVGGTQACEGGWSQGLPLPPPPPPAAQLPPIVSQGNAGPWPQGAHGEGSLASSQAKAPPDDSCNPRSVYENFRLWQHYKPLARRHLPQSPDTEALSCFLIPVLRSLARRKPTMTLEEGLWRAMREWQHTSNFDRMIFYEMAEKFLEFEAEEEMQIQKSQWMKGPQCLPPPATPRLEPRGPPAPEVVKQPVYLPSKAGPKAPTACLPPPRPQRPVTKARRPPPRPHRRAETKARLPPPRPQRPAETKVPEEIPPEVVQEYVDIMEELLGPSLGATGEPEKQREEGEVKQPQEEDWTPPDPGLLSYTDKLCSQKDFVTKVEAVIHPQFLEELLSPDPQMDFLALSQELEQEEGLTLAQLVEKRLLPLKEKQHARAAPSRGTARLDSSSSKFAAGQGAERDVPVPQQGVGMETCPPQTTARDSQGRGRAHTGMARSKDSVVLLGCQDSPGLRAARPTSPPQDHRPTCPGVGTKDALDLPGGSPVRESHGLAQGSSEEEELPSLAFLLGSQHKLLPWWLPQSPVPASGLLSPEKWGPQGTHQFPSAERRGLNLAPSPANKAKKRPLFGSLSPAEKTPHPGPGLRVSGEQSLTWGLGGPSQSQKRKGDPLVSRKEKKQRCSQ.

Disordered regions lie at residues 273-324 (WSQG…DDSC), 417-566 (QKSQ…LSYT), 627-757 (KEKQ…EEEE), and 775-878 (WLPQ…RCSQ). Composition is skewed to pro residues over residues 278–288 (PLPPPPPPAAQ) and 427–444 (CLPPPATPRLEPRGPPAP). Basic residues predominate over residues 476 to 487 (TKARRPPPRPHR). Basic and acidic residues predominate over residues 537-551 (EPEKQREEGEVKQPQ).

Belongs to the NUT family.

The polypeptide is NUT family member 2A (NUTM2A) (Homo sapiens (Human)).